A 153-amino-acid chain; its full sequence is NADPH-dependent 7-cyano-7-deazaguanine reductase (153 aa).

Residues M1 to P30 are disordered. C51 (thioimide intermediate) is an active-site residue. D58 functions as the Proton donor in the catalytic mechanism. Residues V73–S75 and H92–E93 contribute to the substrate site.

This sequence belongs to the GTP cyclohydrolase I family. QueF type 1 subfamily.

It localises to the cytoplasm. It catalyses the reaction 7-aminomethyl-7-carbaguanine + 2 NADP(+) = 7-cyano-7-deazaguanine + 2 NADPH + 3 H(+). It participates in tRNA modification; tRNA-queuosine biosynthesis. Catalyzes the NADPH-dependent reduction of 7-cyano-7-deazaguanine (preQ0) to 7-aminomethyl-7-deazaguanine (preQ1). This Methylorubrum extorquens (strain CM4 / NCIMB 13688) (Methylobacterium extorquens) protein is NADPH-dependent 7-cyano-7-deazaguanine reductase.